A 138-amino-acid chain; its full sequence is Putative nickel-responsive regulator (138 aa).

Ni(2+) contacts are provided by histidine 78, histidine 89, histidine 91, and cysteine 97.

Belongs to the transcriptional regulatory CopG/NikR family. Ni(2+) is required as a cofactor.

Functionally, transcriptional regulator. This Pyrococcus horikoshii (strain ATCC 700860 / DSM 12428 / JCM 9974 / NBRC 100139 / OT-3) protein is Putative nickel-responsive regulator.